A 426-amino-acid chain; its full sequence is Synaptotagmin-13 (426 aa).

At 1–6 the chain is on the vesicular side; the sequence is MVLSVP. Residues 7-29 form a helical membrane-spanning segment; sequence VIALGATLGTATSILALCGVTCL. At 30-426 the chain is on the cytoplasmic side; it reads CRHMHPKKGL…QIAMWHQLHL (397 aa). 2 C2 domains span residues 158–275 and 287–422; these read QAPK…AQWG and GTGE…AMWH.

The protein belongs to the synaptotagmin family. In terms of assembly, interacts with NRXN1. As to expression, expressed in brain, spleen, kidney and testis.

The protein localises to the membrane. Its function is as follows. May be involved in transport vesicle docking to the plasma membrane. This is Synaptotagmin-13 (Syt13) from Rattus norvegicus (Rat).